A 283-amino-acid polypeptide reads, in one-letter code: ATP synthase gamma chain (283 aa).

This sequence belongs to the ATPase gamma chain family. As to quaternary structure, F-type ATPases have 2 components, CF(1) - the catalytic core - and CF(0) - the membrane proton channel. CF(1) has five subunits: alpha(3), beta(3), gamma(1), delta(1), epsilon(1). CF(0) has three main subunits: a, b and c.

It localises to the cell membrane. Functionally, produces ATP from ADP in the presence of a proton gradient across the membrane. The gamma chain is believed to be important in regulating ATPase activity and the flow of protons through the CF(0) complex. This chain is ATP synthase gamma chain, found in Clostridium perfringens (strain ATCC 13124 / DSM 756 / JCM 1290 / NCIMB 6125 / NCTC 8237 / Type A).